The following is a 93-amino-acid chain: Small ribosomal subunit protein uS19 (93 aa).

The protein belongs to the universal ribosomal protein uS19 family.

Functionally, protein S19 forms a complex with S13 that binds strongly to the 16S ribosomal RNA. This chain is Small ribosomal subunit protein uS19, found in Caldanaerobacter subterraneus subsp. tengcongensis (strain DSM 15242 / JCM 11007 / NBRC 100824 / MB4) (Thermoanaerobacter tengcongensis).